Here is a 257-residue protein sequence, read N- to C-terminus: Type III pantothenate kinase (257 aa).

Asp-6 to Lys-13 is an ATP binding site. Gly-109–Arg-112 lines the substrate pocket. Residue Asp-111 is the Proton acceptor of the active site. Residue Asp-132 coordinates K(+). Thr-135 lines the ATP pocket. Thr-187 lines the substrate pocket.

It belongs to the type III pantothenate kinase family. In terms of assembly, homodimer. Requires NH4(+) as cofactor. K(+) serves as cofactor.

It localises to the cytoplasm. It catalyses the reaction (R)-pantothenate + ATP = (R)-4'-phosphopantothenate + ADP + H(+). The protein operates within cofactor biosynthesis; coenzyme A biosynthesis; CoA from (R)-pantothenate: step 1/5. Its function is as follows. Catalyzes the phosphorylation of pantothenate (Pan), the first step in CoA biosynthesis. This is Type III pantothenate kinase from Anaplasma marginale (strain Florida).